Consider the following 843-residue polypeptide: NADH-quinone oxidoreductase subunit G (843 aa).

The 2Fe-2S ferredoxin-type domain maps to 20–98 (DLVTLTIDGA…GMVVKTQLTS (79 aa)). Residues cysteine 54, cysteine 65, cysteine 68, and cysteine 82 each contribute to the [2Fe-2S] cluster site. A 4Fe-4S His(Cys)3-ligated-type domain is found at 100–139 (VAEKAQHGVMELLLINHPLDCPVCDKGGECPLQNQAMSHG). The [4Fe-4S] cluster site is built by histidine 116, cysteine 120, cysteine 123, cysteine 129, cysteine 169, cysteine 172, cysteine 175, cysteine 219, cysteine 245, cysteine 248, cysteine 252, and cysteine 280. The 4Fe-4S Mo/W bis-MGD-type domain occupies 238-294 (LISSPSVCEHCSGGCATRTDHRRGKVMRRLAANEPEVNEEWICDKGRFGFRYAQQRD).

It belongs to the complex I 75 kDa subunit family. [2Fe-2S] cluster serves as cofactor. [4Fe-4S] cluster is required as a cofactor.

The enzyme catalyses a quinone + NADH + 5 H(+)(in) = a quinol + NAD(+) + 4 H(+)(out). Its function is as follows. NDH-1 shuttles electrons from NADH, via FMN and iron-sulfur (Fe-S) centers, to quinones in the respiratory chain. Couples the redox reaction to proton translocation (for every two electrons transferred, four hydrogen ions are translocated across the cytoplasmic membrane), and thus conserves the redox energy in a proton gradient. The polypeptide is NADH-quinone oxidoreductase subunit G (nuoG) (Streptomyces coelicolor (strain ATCC BAA-471 / A3(2) / M145)).